Consider the following 250-residue polypeptide: Ribosome-inactivating protein luffin-B (250 aa).

E160 is an active-site residue.

Belongs to the ribosome-inactivating protein family. Type 1 RIP subfamily.

The catalysed reaction is Endohydrolysis of the N-glycosidic bond at one specific adenosine on the 28S rRNA.. The protein is Ribosome-inactivating protein luffin-B of Luffa aegyptiaca (Sponge gourd).